A 309-amino-acid chain; its full sequence is MVKIYAPASIGNVSVGFDVLGAAVSPVDGTLLGDCVSVEAAAEFSLRNEGRFVSKLPADPKDNIVYQCWDRFCSAIGQRVPVAMTLEKNMPIGSGLGSSACSVVAGLMAMNEYCNRPLNNNELLILMGELEGRVSGSVHFDNVAPCFLGGMQLMLEENDIISQPVPGFNDWLWVMAYPGIKVSTAEARAILPAQYRKEEIIRHGRYLGGFIHACHTQQPLLAAKLMQDVIAEPYRTKLLPGFAQARQAAADIGALACGISGSGPTLFAVCNQPDTANRMADWLSQHYLQNDEGFVHICRLDTAGARKLG.

An ATP-binding site is contributed by 91-101 (PIGSGLGSSAC).

This sequence belongs to the GHMP kinase family. Homoserine kinase subfamily.

The protein resides in the cytoplasm. The enzyme catalyses L-homoserine + ATP = O-phospho-L-homoserine + ADP + H(+). It participates in amino-acid biosynthesis; L-threonine biosynthesis; L-threonine from L-aspartate: step 4/5. Functionally, catalyzes the ATP-dependent phosphorylation of L-homoserine to L-homoserine phosphate. The protein is Homoserine kinase of Erwinia tasmaniensis (strain DSM 17950 / CFBP 7177 / CIP 109463 / NCPPB 4357 / Et1/99).